A 137-amino-acid polypeptide reads, in one-letter code: uncharacterized protein (137 aa).

Residues 4-21 (ISWQIVLAVIGVVAGFII) traverse the membrane as a helical segment.

Its subcellular location is the membrane. This is an uncharacterized protein from Archaeoglobus fulgidus (strain ATCC 49558 / DSM 4304 / JCM 9628 / NBRC 100126 / VC-16).